A 206-amino-acid chain; its full sequence is Tumor protein D54 (206 aa).

Met1 is subject to N-acetylmethionine. Residues 1 to 14 are compositionally biased toward polar residues; the sequence is MDSAGQDINLNSPN. The disordered stretch occupies residues 1–24; sequence MDSAGQDINLNSPNKGLLSDSMTD. Ser3, Ser12, Ser19, and Ser21 each carry phosphoserine. Residues 38 to 82 adopt a coiled-coil conformation; sequence VEGLTEAEEEELRAELTKVEEEIVTLRQVLAAKERHCGELKRRLG. Residues Ser96, Ser149, and Ser161 each carry the phosphoserine modification. A Phosphothreonine modification is found at Thr163. Ser166 carries the post-translational modification Phosphoserine. A Phosphothreonine modification is found at Thr173. Residues 175-185 show a composition bias toward basic and acidic residues; the sequence is KSKVVGDRENG. Residues 175–206 form a disordered region; sequence KSKVVGDRENGSDNLPSSAGSGDKPLSDPAPF. 2 positions are modified to phosphoserine: Ser192 and Ser195.

The protein belongs to the TPD52 family. As to quaternary structure, forms a homodimer or heterodimer with other members of the family. Interacts with MAL2.

The chain is Tumor protein D54 (TPD52L2) from Homo sapiens (Human).